The sequence spans 715 residues: MAANMYRVGDYVYFENSSSNPYLIRRIEELNKTANGNVEAKVVCFYRRRDISSTLIALADKHATLSVCYKAGPGADNGEEGEIEEEMENPEMVDLPEKLKHQLRHRELFLSRQLESLPATHIRGKCSVTLLNETESLKSYLEREDFFFYSLVYDPQQKTLLADKGEIRVGNRYQADITDLLKEGEEDGRDQSRLETQVWEAHNPLTDKQIDQFLVVARSVGTFARALDCSSSVRQPSLHMSAAAASRDITLFHAMDTLHKNIYDISKAISALVPQGGPVLCRDEMEEWSASEANLFEEALEKYGKDFTDIQQDFLPWKSLTSIIEYYYMWKTTDRYVQQKRLKAAEAESKLKQVYIPNYNKPNPNQISVNNVKAGVVNGTGAPGQSPGAGRACESCYTTQSYQWYSWGPPNMQCRLCASCWTYWKKYGGLKMPTRLDGERPGPNRSNMSPHGLPARSSGSPKFAMKTRQAFYLHTTKLTRIARRLCREILRPWHAARHPYLPINSAAIKAECTARLPEASQSPLVLKQAVRKPLEAVLRYLETHPRPPKPDPVKSVSSVLSSLTPAKVAPVINNGSPTILGKRSYEQHNGVDGNMKKRLLMPSRGLANHGQARHMGPSRNLLLNGKSYPTKVRLIRGGSLPPVKRRRMNWIDAPDDVFYMATEETRKIRKLLSSSETKRAARRPYKPIALRQSQALPPRPPPPAPVNDEPIVIED.

In terms of domain architecture, BAH spans 1-164 (MAANMYRVGD…PQQKTLLADK (164 aa)). The ELM2 domain occupies 165–276 (GEIRVGNRYQ…KAISALVPQG (112 aa)). Residue lysine 182 forms a Glycyl lysine isopeptide (Lys-Gly) (interchain with G-Cter in ubiquitin) linkage. The SANT domain occupies 283-335 (DEMEEWSASEANLFEEALEKYGKDFTDIQQDFLPWKSLTSIIEYYYMWKTTDR). At serine 386 the chain carries Phosphoserine. The GATA-type; atypical zinc-finger motif lies at 393 to 420 (CESCYTTQSYQWYSWGPPNMQCRLCASC). The segment at 435–460 (RLDGERPGPNRSNMSPHGLPARSSGS) is disordered. Phosphoserine is present on residues serine 446 and serine 449. Lysine 509 is covalently cross-linked (Glycyl lysine isopeptide (Lys-Gly) (interchain with G-Cter in SUMO2 and SUMO3)). A Phosphoserine modification is found at serine 522. The SH3-binding motif lies at 545 to 552 (PRPPKPDP). Lysine 549 is covalently cross-linked (Glycyl lysine isopeptide (Lys-Gly) (interchain with G-Cter in SUMO2)). Position 564 is a phosphothreonine (threonine 564). Serine 576 bears the Phosphoserine mark. Phosphothreonine is present on threonine 578. N6-acetyllysine; alternate is present on lysine 626. Lysine 626 is covalently cross-linked (Glycyl lysine isopeptide (Lys-Gly) (interchain with G-Cter in ubiquitin); alternate). At serine 639 the chain carries Phosphoserine. Positions 656 to 686 (DVFYMATEETRKIRKLLSSSETKRAARRPYK) are interaction with RBBP4. Residues 673 to 715 (SSSETKRAARRPYKPIALRQSQALPPRPPPPAPVNDEPIVIED) form a disordered region. The SH3-binding motif lies at 696 to 705 (LPPRPPPPAP). Positions 711 to 715 (IVIED) match the SUMO interaction motif 1 (SIM); crucial for efficient sumoylation motif.

It belongs to the metastasis-associated protein family. In terms of assembly, component of the nucleosome remodeling and deacetylase (NuRD) repressor complex, composed of core proteins MTA1, MTA2, MTA3, RBBP4, RBBP7, HDAC1, HDAC2, MBD2, MBD3, and peripherally associated proteins CDK2AP1, CDK2AP2, GATAD2A, GATAD2B, CHD3, CHD4 and CHD5. The exact stoichiometry of the NuRD complex is unknown, and some subunits such as MBD2 and MBD3, GATAD2A and GATAD2B, and CHD3, CHD4 and CHD5 define mutually exclusive NuRD complexes. Interacts with RBBP4; the interaction is direct. Interacts with BMAL1. Interacts with CLOCK. Interacts with COP1. Interacts with CSNK1G2 in the cytoplasm. Interacts with EP300. Interacts with HDAC2. Interacts with IFI16. Interacts with ITGB3BP/CENPR. Interacts with MBD3L2. Interacts with MDM2. Interacts with NACC2. Interacts with p53/TP53. Interacts with PIAS1. Interacts with PIAS3. Interacts with PIAS4. Interacts with PWWP2A. Interacts with PWWP2B. Interacts with SENP1. Interacts with SENP2. Interacts with SIX3; facilitates the binding of SIX3 to the core DNA motif of SIX3 promoter. Interacts with SUMO1. Interacts with SUMO2. Interacts with TFCP2L1; which is indispensable for TFCP2L1-mediated self-renewal-promoting effect and endoderm-inhibiting action. Interacts with TFAP2C. Interacts with TPR. Interacts with UBE2I/UBC9. Phosphorylation by CSNK1G2/CK1 triggered by estrogen enhances corepression of estrogen receptor (ER). In terms of processing, acetylation is essential for its transcriptional coactivator activity. Post-translationally, sumoylation positively regulates its transcriptional corepressor activity but does not affect the protein stability. Sumoylated preferentially by SUMO2 or SUMO3 than SUMO1. Sumoylation is enhanced by PIAS1/3/4 and preferentially sumoylated by SUMO2 in the presence of PIAS1/3/4. Desumoylated by SENP1. Ubiquitinated by COP1, which leads to proteasomal degradation. Widely expressed. High expression in brain, liver, kidney, and cardiac muscle, ovaries, adrenal glands and virgin mammary glands. Higher in tumors than in adjacent normal tissue from the same individual. Up-regulated in a wide variety of cancers including breast, liver, ovarian, and colorectal cancer and its expression levels are closely correlated with tumor aggressiveness and metastasis.

The protein localises to the nucleus. It localises to the cytoplasm. It is found in the nucleus envelope. The protein resides in the cytoskeleton. In terms of biological role, transcriptional coregulator which can act as both a transcriptional corepressor and coactivator. Acts as a component of the histone deacetylase NuRD complex which participates in the remodeling of chromatin. In the NuRD complex, regulates transcription of its targets by modifying the acetylation status of the target chromatin and cofactor accessibility to the target DNA. In conjunction with other components of NuRD, acts as a transcriptional corepressor of BRCA1, ESR1, TFF1 and CDKN1A. Acts as a transcriptional coactivator of BCAS3, and SUMO2, independent of the NuRD complex. Stimulates the expression of WNT1 by inhibiting the expression of its transcriptional corepressor SIX3. Regulates p53-dependent and -independent DNA repair processes following genotoxic stress. Regulates the stability and function of p53/TP53 by inhibiting its ubiquitination by COP1 and MDM2 thereby regulating the p53-dependent DNA repair. Plays a role in the regulation of the circadian clock and is essential for the generation and maintenance of circadian rhythms under constant light and for normal entrainment of behavior to light-dark (LD) cycles. Positively regulates the CLOCK-BMAL1 heterodimer mediated transcriptional activation of its own transcription and the transcription of CRY1. Regulates deacetylation of BMAL1 by regulating SIRT1 expression, resulting in derepressing CRY1-mediated transcription repression. With TFCP2L1, promotes establishment and maintenance of pluripotency in embryonic stem cells (ESCs) and inhibits endoderm differentiation. Functionally, binds to ESR1 and sequesters it in the cytoplasm and enhances its non-genomic responses. This chain is Metastasis-associated protein MTA1 (MTA1), found in Homo sapiens (Human).